A 553-amino-acid chain; its full sequence is MDMVAHAEINNLSFVYADENEKALQHISLSVQKGEFIALAGGSGSGKTTLLKHLKKELLPIGKRTGDTYYDGTLLENVPDLLSAQEIGMVFQNPENQLVMDTVIQELAFSLENIGLPSHIIQKRIAELISFLGFQDLLHQSVHTLSGGQKQLVNLAAVLVMQPKLLLLDEPTAQLDPIAAKEFLGLLKRINEELGITIVLSEHRLDEVIPLATRVICMNNGRIVYDGSPKRVIANMWEVEGFRPFIPQIPRLFLEWNAKDIPFTVREAQMKMNDFSAISYVNEPIVQREKQEVILSAEHISFQYEKNSPLILRDLTVSIEKGKWVALVGKNGTGKSTLLTILAGLQKARRGKVKWNGKVIHKIDSKERFKSIGYVSQHPYYHFTFDTVWDEVYERARELYGEQGKEIAEQQLKKFWLYALKERHPHDCSGGEQQLLALCTTLLSKPTLLLLDEPTKGLDPWKKERVGELFRKLQKEGTTIVMATHDIEFAAKYVDQCMMLFDGAVIMNDAPKEFFSGNFFYTTSINRFIRKELPYALTWEDVYEACPNDMLHS.

ABC transporter domains are found at residues 7 to 245 and 295 to 527; these read AEIN…FRPF and LSAE…SINR. Residues 41–48 and 329–336 contribute to the ATP site; these read GGSGSGKT and GKNGTGKS.

It belongs to the ABC transporter superfamily.

The protein localises to the cell membrane. Functionally, probably part of an ABC transporter complex. Responsible for energy coupling to the transport system. The polypeptide is Putative ABC transporter ATP-binding protein BCE_3323 (Bacillus cereus (strain ATCC 10987 / NRS 248)).